The sequence spans 293 residues: Glycine--tRNA ligase alpha subunit (293 aa).

This sequence belongs to the class-II aminoacyl-tRNA synthetase family. In terms of assembly, tetramer of two alpha and two beta subunits.

The protein resides in the cytoplasm. The catalysed reaction is tRNA(Gly) + glycine + ATP = glycyl-tRNA(Gly) + AMP + diphosphate. The chain is Glycine--tRNA ligase alpha subunit from Prochlorococcus marinus (strain MIT 9211).